The primary structure comprises 339 residues: Serine/threonine-protein kinase pdik1l-B (339 aa).

The Protein kinase domain occupies Y8–F332. Residues V14–V22 and K37 each bind ATP. Catalysis depends on D164, which acts as the Proton acceptor.

This sequence belongs to the protein kinase superfamily. Ser/Thr protein kinase family.

The protein resides in the nucleus. It catalyses the reaction L-seryl-[protein] + ATP = O-phospho-L-seryl-[protein] + ADP + H(+). The enzyme catalyses L-threonyl-[protein] + ATP = O-phospho-L-threonyl-[protein] + ADP + H(+). The chain is Serine/threonine-protein kinase pdik1l-B (pdik1-b) from Xenopus laevis (African clawed frog).